Consider the following 461-residue polypeptide: L-seryl-tRNA(Sec) selenium transferase (461 aa).

The residue at position 294 (K294) is an N6-(pyridoxal phosphate)lysine.

The protein belongs to the SelA family. Requires pyridoxal 5'-phosphate as cofactor.

The protein localises to the cytoplasm. The enzyme catalyses L-seryl-tRNA(Sec) + selenophosphate + H(+) = L-selenocysteinyl-tRNA(Sec) + phosphate. Its pathway is aminoacyl-tRNA biosynthesis; selenocysteinyl-tRNA(Sec) biosynthesis; selenocysteinyl-tRNA(Sec) from L-seryl-tRNA(Sec) (bacterial route): step 1/1. Its function is as follows. Converts seryl-tRNA(Sec) to selenocysteinyl-tRNA(Sec) required for selenoprotein biosynthesis. This Actinobacillus pleuropneumoniae serotype 5b (strain L20) protein is L-seryl-tRNA(Sec) selenium transferase.